A 143-amino-acid chain; its full sequence is Ribosome-binding factor A (143 aa).

Residues 123–143 are disordered; it reads DKSLQENYKQNDKETKAEKLR.

Belongs to the RbfA family. Monomer. Binds 30S ribosomal subunits, but not 50S ribosomal subunits or 70S ribosomes.

Its subcellular location is the cytoplasm. In terms of biological role, one of several proteins that assist in the late maturation steps of the functional core of the 30S ribosomal subunit. Associates with free 30S ribosomal subunits (but not with 30S subunits that are part of 70S ribosomes or polysomes). Required for efficient processing of 16S rRNA. May interact with the 5'-terminal helix region of 16S rRNA. The sequence is that of Ribosome-binding factor A from Francisella tularensis subsp. novicida (strain U112).